We begin with the raw amino-acid sequence, 156 residues long: S-ribosylhomocysteine lyase (156 aa).

Fe cation is bound by residues H54, H58, and C123.

The protein belongs to the LuxS family. Homodimer. Requires Fe cation as cofactor.

The catalysed reaction is S-(5-deoxy-D-ribos-5-yl)-L-homocysteine = (S)-4,5-dihydroxypentane-2,3-dione + L-homocysteine. Involved in the synthesis of autoinducer 2 (AI-2) which is secreted by bacteria and is used to communicate both the cell density and the metabolic potential of the environment. The regulation of gene expression in response to changes in cell density is called quorum sensing. Catalyzes the transformation of S-ribosylhomocysteine (RHC) to homocysteine (HC) and 4,5-dihydroxy-2,3-pentadione (DPD). In Ligilactobacillus salivarius (strain UCC118) (Lactobacillus salivarius), this protein is S-ribosylhomocysteine lyase.